The primary structure comprises 283 residues: Protein BASIC PENTACYSTEINE1 (283 aa).

The interval 111–170 (RFEENPIPPPAPCEEQTGKKRKMRGSIATPTVPKAKKMRKPKEERDVTNNNVQQQQQRVK) is disordered. The segment covering 158–169 (TNNNVQQQQQRV) has biased composition (low complexity).

It belongs to the BBR/BPC family. As to expression, expressed in seedlings, leaves and pistils. Detected in the base of flowers and tips of carpels, in leaf and sepal vasculature, in young rosette, in the lateral and tip of primary roots, and in the whole ovule.

The protein resides in the nucleus. Its function is as follows. Transcriptional regulator that specifically binds to GA-rich elements (GAGA-repeats) present in regulatory sequences of genes involved in developmental processes. Negatively regulates the homeotic gene AGL11/STK, which controls ovule primordium identity, by a cooperative binding to purine-rich elements present in the regulatory sequence leading to DNA conformational changes. The sequence is that of Protein BASIC PENTACYSTEINE1 (BPC1) from Arabidopsis thaliana (Mouse-ear cress).